Here is a 208-residue protein sequence, read N- to C-terminus: Large ribosomal subunit protein uL4 (208 aa).

The disordered stretch occupies residues 45 to 84 (RQGTHKVKNRSEVRGGGKKPYRQKGTGHARQGSSRSGLMS). The segment covering 60 to 71 (GGKKPYRQKGTG) has biased composition (basic residues).

It belongs to the universal ribosomal protein uL4 family. As to quaternary structure, part of the 50S ribosomal subunit.

Functionally, one of the primary rRNA binding proteins, this protein initially binds near the 5'-end of the 23S rRNA. It is important during the early stages of 50S assembly. It makes multiple contacts with different domains of the 23S rRNA in the assembled 50S subunit and ribosome. Forms part of the polypeptide exit tunnel. The sequence is that of Large ribosomal subunit protein uL4 from Prosthecochloris aestuarii (strain DSM 271 / SK 413).